A 96-amino-acid chain; its full sequence is ATP synthase subunit e, mitochondrial (96 aa).

At Ser-2 the chain carries N-acetylserine.

It belongs to the ATPase e subunit family. F-type ATPases have 2 components, CF(1) - the catalytic core - and CF(0) - the membrane proton channel. In yeast, the dimeric form of ATP synthase consists of 17 polypeptides: alpha, beta, gamma, delta, epsilon, 4 (B), 5 (OSCP), 6 (A), 8, 9 (C), d, E (Tim11), f, g, h, i/j and k.

Its subcellular location is the mitochondrion. It localises to the mitochondrion inner membrane. Functionally, mitochondrial membrane ATP synthase (F(1)F(0) ATP synthase or Complex V) produces ATP from ADP in the presence of a proton gradient across the membrane which is generated by electron transport complexes of the respiratory chain. F-type ATPases consist of two structural domains, F(1) - containing the extramembraneous catalytic core, and F(0) - containing the membrane proton channel, linked together by a central stalk and a peripheral stalk. During catalysis, ATP synthesis in the catalytic domain of F(1) is coupled via a rotary mechanism of the central stalk subunits to proton translocation. Part of the complex F(0) domain. Minor subunit located with subunit a in the membrane. The protein is ATP synthase subunit e, mitochondrial (TIM11) of Saccharomyces cerevisiae (strain ATCC 204508 / S288c) (Baker's yeast).